The primary structure comprises 249 residues: Probable septum site-determining protein MinC (249 aa).

A disordered region spans residues 115–141 (KPAQEAPAQAEPEAAAAPEPANEPAPA). The segment covering 118–141 (QEAPAQAEPEAAAAPEPANEPAPA) has biased composition (low complexity).

The protein belongs to the MinC family. Interacts with MinD and FtsZ.

Cell division inhibitor that blocks the formation of polar Z ring septums. Rapidly oscillates between the poles of the cell to destabilize FtsZ filaments that have formed before they mature into polar Z rings. Prevents FtsZ polymerization. This chain is Probable septum site-determining protein MinC, found in Marinobacter nauticus (strain ATCC 700491 / DSM 11845 / VT8) (Marinobacter aquaeolei).